The primary structure comprises 126 residues: MNQFMLLGFIAFGGAFGACARYLISELCVVLLGKGFPYGTLTVNIVGSLIMGVLMSSLNQGIIEAAPCRPIIGLGFLGALTTFSTFSMDNVILMQQGEVIKAGLNILLNVTLSITACFIGFQLMKS.

Helical transmembrane passes span 4 to 24 (FMLL…RYLI), 35 to 55 (GFPY…GVLM), 71 to 91 (IIGL…MDNV), and 104 to 124 (LNIL…FQLM). Na(+) contacts are provided by glycine 78 and threonine 81.

Belongs to the fluoride channel Fluc/FEX (TC 1.A.43) family.

The protein localises to the cell inner membrane. It carries out the reaction fluoride(in) = fluoride(out). Its activity is regulated as follows. Na(+) is not transported, but it plays an essential structural role and its presence is essential for fluoride channel function. Fluoride-specific ion channel. Important for reducing fluoride concentration in the cell, thus reducing its toxicity. The sequence is that of Fluoride-specific ion channel FluC from Aliivibrio salmonicida (strain LFI1238) (Vibrio salmonicida (strain LFI1238)).